The following is a 252-amino-acid chain: Isoprenyl transferase 2 (252 aa).

The active site involves aspartate 26. Aspartate 26 lines the Mg(2+) pocket. Substrate-binding positions include 27-30 (GNGR), tryptophan 31, arginine 39, histidine 43, and 71-73 (SSE). Residue asparagine 74 is the Proton acceptor of the active site. Residues tryptophan 75, arginine 77, arginine 194, and 200–202 (RLS) contribute to the substrate site. Glutamate 213 serves as a coordination point for Mg(2+).

This sequence belongs to the UPP synthase family. In terms of assembly, homodimer. Mg(2+) serves as cofactor.

In terms of biological role, catalyzes the condensation of isopentenyl diphosphate (IPP) with allylic pyrophosphates generating different type of terpenoids. The sequence is that of Isoprenyl transferase 2 from Bradyrhizobium diazoefficiens (strain JCM 10833 / BCRC 13528 / IAM 13628 / NBRC 14792 / USDA 110).